Consider the following 363-residue polypeptide: Phosphoserine aminotransferase (363 aa).

R42 is a binding site for L-glutamate. Pyridoxal 5'-phosphate-binding positions include 76-77 (GR), W102, T156, D175, and Q198. K199 carries the N6-(pyridoxal phosphate)lysine modification. 240–241 (NT) serves as a coordination point for pyridoxal 5'-phosphate.

It belongs to the class-V pyridoxal-phosphate-dependent aminotransferase family. SerC subfamily. In terms of assembly, homodimer. Pyridoxal 5'-phosphate serves as cofactor.

It localises to the cytoplasm. It carries out the reaction O-phospho-L-serine + 2-oxoglutarate = 3-phosphooxypyruvate + L-glutamate. The catalysed reaction is 4-(phosphooxy)-L-threonine + 2-oxoglutarate = (R)-3-hydroxy-2-oxo-4-phosphooxybutanoate + L-glutamate. Its pathway is amino-acid biosynthesis; L-serine biosynthesis; L-serine from 3-phospho-D-glycerate: step 2/3. It functions in the pathway cofactor biosynthesis; pyridoxine 5'-phosphate biosynthesis; pyridoxine 5'-phosphate from D-erythrose 4-phosphate: step 3/5. Functionally, catalyzes the reversible conversion of 3-phosphohydroxypyruvate to phosphoserine and of 3-hydroxy-2-oxo-4-phosphonooxybutanoate to phosphohydroxythreonine. The chain is Phosphoserine aminotransferase from Shewanella baltica (strain OS155 / ATCC BAA-1091).